We begin with the raw amino-acid sequence, 109 residues long: Small ribosomal subunit protein bS6 (109 aa).

This sequence belongs to the bacterial ribosomal protein bS6 family.

Its function is as follows. Binds together with bS18 to 16S ribosomal RNA. This is Small ribosomal subunit protein bS6 from Anaplasma phagocytophilum (strain HZ).